A 108-amino-acid chain; its full sequence is UPF0145 protein LCABL_07110 (108 aa).

The protein belongs to the UPF0145 family.

The chain is UPF0145 protein LCABL_07110 from Lacticaseibacillus casei (strain BL23) (Lactobacillus casei).